We begin with the raw amino-acid sequence, 289 residues long: MKPFKLIFISALMILIMTNATPISHLNAQANEENKKLKYEKNSALALNYHRVRKKDPLNDFISLLSGSKEIKNYSVTDQEFKSQIQWLKAHDAKFLTLKEFIKYKEKGKFPKRSVWINFDDMDQTIYDNAFPVLKKYHIPATGFLITNHIGSTNFHNLNLLSKKQLDEMYETGLWDFESHTHDLHALKKGNKSKFLDSSQSVASKDIKKSEHYLNKNYPKNERALAYPYGLINDDKIKAMKKNGIQYGFTLQEKAVTPDADNYRIPRILVSNDAFETLIKEWDGFDEEK.

Residues 1 to 30 (MKPFKLIFISALMILIMTNATPISHLNAQA) form the signal peptide. The NodB homology domain maps to 113 to 289 (RSVWINFDDM…KEWDGFDEEK (177 aa)).

This sequence belongs to the polysaccharide deacetylase family.

The protein resides in the secreted. The protein localises to the cell wall. Its function is as follows. Catalyzes the N-deacetylation of poly-beta-1,6-N-acetyl-D-glucosamine (PNAG, also referred to as PIA), a biofilm adhesin polysaccharide. In fact, the IcaB deacetylase converts 15 to 20% of the GlcNAc residues of PNAG to glucosamine. N-deacetylation is crucial for attachment of the polysaccharide to the bacterial cell surface; it leads to the introduction of positive charges in the otherwise neutral PIA polymer, allowing electrostatic interactions. Deacetylation of the polymer is also essential for key virulence mechanisms of S.epidermidis, namely biofilm formation, colonization, and resistance to neutrophil phagocytosis and human antibacterial peptides. This is Poly-beta-1,6-N-acetyl-D-glucosamine N-deacetylase (icaB) from Staphylococcus epidermidis (strain ATCC 35984 / DSM 28319 / BCRC 17069 / CCUG 31568 / BM 3577 / RP62A).